The sequence spans 287 residues: uncharacterized protein (287 aa).

Residues 43 to 50, 90 to 93, and 156 to 159 each bind GTP; these read GKTGAGKS, DLPG, and DKAE. The G domain occupies 48 to 140; it reads GKSSLCNALF…TDEHFYRQVI (93 aa).

This sequence to E.coli YkfA and YeeP.

This is an uncharacterized protein from Escherichia coli (strain K12).